Here is a 225-residue protein sequence, read N- to C-terminus: UPF0758 protein MADE_1000235 (225 aa).

An MPN domain is found at 102–224 (VFNNVDDTKR…TISFAQRGLL (123 aa)). The Zn(2+) site is built by His173, His175, and Asp186. The short motif at 173–186 (HNHPSGVAEPSHAD) is the JAMM motif element.

Belongs to the UPF0758 family.

This Alteromonas mediterranea (strain DSM 17117 / CIP 110805 / LMG 28347 / Deep ecotype) protein is UPF0758 protein MADE_1000235.